Consider the following 279-residue polypeptide: Ribosome maturation factor RimP (279 aa).

The disordered stretch occupies residues 197 to 279; that stretch reads LAEEGEPEEQ…GAPALRPTPK (83 aa). The span at 199–210 shows a compositional bias: acidic residues; that stretch reads EEGEPEEQEEGG.

It belongs to the RimP family.

It is found in the cytoplasm. Functionally, required for maturation of 30S ribosomal subunits. The chain is Ribosome maturation factor RimP from Methylocella silvestris (strain DSM 15510 / CIP 108128 / LMG 27833 / NCIMB 13906 / BL2).